Consider the following 65-residue polypeptide: Protein translocase subunit SecE (65 aa).

A helical membrane pass occupies residues 38–58 (IVIVTVVFFLIFFYALDLGIG).

The protein belongs to the SecE/SEC61-gamma family. In terms of assembly, component of the Sec protein translocase complex. Heterotrimer consisting of SecY, SecE and SecG subunits. The heterotrimers can form oligomers, although 1 heterotrimer is thought to be able to translocate proteins. Interacts with the ribosome. Interacts with SecDF, and other proteins may be involved. Interacts with SecA.

It localises to the cell membrane. Essential subunit of the Sec protein translocation channel SecYEG. Clamps together the 2 halves of SecY. May contact the channel plug during translocation. This is Protein translocase subunit SecE from Staphylococcus carnosus (strain TM300).